Here is a 74-residue protein sequence, read N- to C-terminus: Putative defensin-like protein 186 (74 aa).

Residues 1 to 22 form the signal peptide; sequence MKNSSIILVLVFFFFISSSGEA. Intrachain disulfides connect Cys-25–Cys-74, Cys-31–Cys-51, Cys-37–Cys-68, and Cys-41–Cys-70.

The protein belongs to the DEFL family.

Its subcellular location is the secreted. The sequence is that of Putative defensin-like protein 186 (LCR40) from Arabidopsis thaliana (Mouse-ear cress).